A 196-amino-acid chain; its full sequence is UPF0301 protein BF2109 (196 aa).

Belongs to the UPF0301 (AlgH) family.

In Bacteroides fragilis (strain ATCC 25285 / DSM 2151 / CCUG 4856 / JCM 11019 / LMG 10263 / NCTC 9343 / Onslow / VPI 2553 / EN-2), this protein is UPF0301 protein BF2109.